The chain runs to 299 residues: ATP phosphoribosyltransferase (299 aa).

Belongs to the ATP phosphoribosyltransferase family. Long subfamily. Mg(2+) serves as cofactor.

The protein resides in the cytoplasm. It catalyses the reaction 1-(5-phospho-beta-D-ribosyl)-ATP + diphosphate = 5-phospho-alpha-D-ribose 1-diphosphate + ATP. Its pathway is amino-acid biosynthesis; L-histidine biosynthesis; L-histidine from 5-phospho-alpha-D-ribose 1-diphosphate: step 1/9. Feedback inhibited by histidine. In terms of biological role, catalyzes the condensation of ATP and 5-phosphoribose 1-diphosphate to form N'-(5'-phosphoribosyl)-ATP (PR-ATP). Has a crucial role in the pathway because the rate of histidine biosynthesis seems to be controlled primarily by regulation of HisG enzymatic activity. The chain is ATP phosphoribosyltransferase from Baumannia cicadellinicola subsp. Homalodisca coagulata.